Consider the following 346-residue polypeptide: Probable galacturonosyltransferase-like 6 (346 aa).

Residues 1 to 21 (MLWITRFAGLFSAAMAVIVLS) form a helical; Signal-anchor for type II membrane protein membrane-spanning segment. Topologically, residues 22 to 346 (PSLQSFPPAA…TPYDLYRHSH (325 aa)) are lumenal. Asn203 carries N-linked (GlcNAc...) asparagine glycosylation.

The protein belongs to the glycosyltransferase 8 family.

The protein resides in the golgi apparatus membrane. Its pathway is glycan metabolism; pectin biosynthesis. Its function is as follows. May be involved in pectin and/or xylans biosynthesis in cell walls. This chain is Probable galacturonosyltransferase-like 6 (GATL6), found in Arabidopsis thaliana (Mouse-ear cress).